Consider the following 234-residue polypeptide: Phosphoribosylaminoimidazole-succinocarboxamide synthase (234 aa).

The protein belongs to the SAICAR synthetase family.

It carries out the reaction 5-amino-1-(5-phospho-D-ribosyl)imidazole-4-carboxylate + L-aspartate + ATP = (2S)-2-[5-amino-1-(5-phospho-beta-D-ribosyl)imidazole-4-carboxamido]succinate + ADP + phosphate + 2 H(+). It functions in the pathway purine metabolism; IMP biosynthesis via de novo pathway; 5-amino-1-(5-phospho-D-ribosyl)imidazole-4-carboxamide from 5-amino-1-(5-phospho-D-ribosyl)imidazole-4-carboxylate: step 1/2. This chain is Phosphoribosylaminoimidazole-succinocarboxamide synthase, found in Staphylococcus epidermidis (strain ATCC 35984 / DSM 28319 / BCRC 17069 / CCUG 31568 / BM 3577 / RP62A).